A 78-amino-acid polypeptide reads, in one-letter code: DNA-directed RNA polymerase subunit omega (78 aa).

The protein belongs to the RNA polymerase subunit omega family. In cyanobacteria the RNAP catalytic core is composed of 2 alpha, 1 beta, 1 beta', 1 gamma and 1 omega subunit. When a sigma factor is associated with the core the holoenzyme is formed, which can initiate transcription.

The catalysed reaction is RNA(n) + a ribonucleoside 5'-triphosphate = RNA(n+1) + diphosphate. In terms of biological role, promotes RNA polymerase assembly. Latches the N- and C-terminal regions of the beta' subunit thereby facilitating its interaction with the beta and alpha subunits. This Prochlorococcus marinus (strain MIT 9312) protein is DNA-directed RNA polymerase subunit omega.